Reading from the N-terminus, the 201-residue chain is Cold shock domain-containing protein 4 (201 aa).

Serine 2 is subject to N-acetylserine. Positions 14 to 81 (RRKGTVKWFD…RPKAIEVSGP (68 aa)) constitute a CSD domain. Positions 66-109 (EVDNSGRPKAIEVSGPDGAPVQGNSGGGGSSGGRGGFGGGGGRG) are disordered. Gly residues predominate over residues 89–109 (NSGGGGSSGGRGGFGGGGGRG). CCHC-type zinc fingers lie at residues 136–153 (NSCFKCGEPGHMARECSQ) and 180–197 (LSCYSCGESGHFARDCTS).

The protein belongs to the cold shock protein (CSP) family. In terms of tissue distribution, mostly expressed in shoot apices and siliques, and, to a lower extent, in roots, cotyledons, stems, shoots, leaves, floral buds and flowers. Present in shoot apical meristems and siliques (at protein level). Very low levels are observed in cv. Landsberg erecta compared to cv. Columbia.

The protein resides in the cytoplasm. Its subcellular location is the nucleus. It is found in the nucleolus. Its function is as follows. Chaperone that binds to and unwinds RNA and both single-stranded DNA and double-stranded DNA (ssDNA and dsDNA DNA). Regulates the flowering transition and flower and seed development, particularly at late stages of embryo development, through regulation of gene expression (including MEA, FIS2, AP1, CAL, AG and SHP2). This is Cold shock domain-containing protein 4 (CSP4) from Arabidopsis thaliana (Mouse-ear cress).